A 256-amino-acid polypeptide reads, in one-letter code: Isoprenyl transferase (256 aa).

D33 is an active-site residue. Mg(2+) is bound at residue D33. Substrate is bound by residues 34-37 (GNGR), W38, R46, H50, and 78-80 (STE). The active-site Proton acceptor is the N81. Substrate-binding positions include W82, R84, R201, and 207 to 209 (RIS). E220 provides a ligand contact to Mg(2+).

Belongs to the UPP synthase family. In terms of assembly, homodimer. Mg(2+) serves as cofactor.

Its function is as follows. Catalyzes the condensation of isopentenyl diphosphate (IPP) with allylic pyrophosphates generating different type of terpenoids. This chain is Isoprenyl transferase, found in Staphylococcus epidermidis (strain ATCC 35984 / DSM 28319 / BCRC 17069 / CCUG 31568 / BM 3577 / RP62A).